The sequence spans 603 residues: uncharacterized protein (603 aa).

Positions 1–93 (MSFVIAAPET…AGAYASAEAA (93 aa)) constitute a PE domain. The interval 309 to 333 (GIFTGNGGTGGTGGTGTGNQLVGGE) is disordered.

This sequence belongs to the mycobacterial PE family. PGRS subfamily.

This is an uncharacterized protein from Mycobacterium tuberculosis (strain CDC 1551 / Oshkosh).